Here is a 645-residue protein sequence, read N- to C-terminus: Cysteine-rich receptor-like protein kinase 10 (645 aa).

The N-terminal stretch at Met1–Ala27 is a signal peptide. Gnk2-homologous domains are found at residues Gln28–Phe132 and Ser140–Phe251. Residues Gln28–Ser283 lie on the Extracellular side of the membrane. N-linked (GlcNAc...) asparagine glycosylation is found at Asn39 and Asn91. Disulfide bonds link Cys86/Cys95 and Cys98/Cys123. N-linked (GlcNAc...) asparagine glycans are attached at residues Asn151 and Asn169. Disulfide bonds link Cys204–Cys213 and Cys216–Cys242. The chain crosses the membrane as a helical span at residues Ala284–Phe304. Over Cys305–Ser645 the chain is Cytoplasmic. Positions Phe348 to Leu619 constitute a Protein kinase domain. Residues Leu354–Val362 and Lys376 each bind ATP. Asp473 (proton acceptor) is an active-site residue.

The protein belongs to the protein kinase superfamily. Ser/Thr protein kinase family. CRK subfamily.

The protein resides in the membrane. Functionally, involved in disease resistance. Required for NPR1/NH1-mediated immunity to the bacterial blight pathogen Xanthomomas oryzae pv. oryzae (Xoo). Required for the benzothiadiazole (BTH)-induced immune response. Probably regulated by the transcription factor TGA2.1. This is Cysteine-rich receptor-like protein kinase 10 from Oryza sativa subsp. japonica (Rice).